A 451-amino-acid polypeptide reads, in one-letter code: Signal transduction histidine-protein kinase ArlS (451 aa).

A run of 2 helical transmembrane segments spans residues 11–31 (IIVTTMITFVTIFLFCLIIIF) and 156–176 (IIALAFGVIATIITATISYVF). The region spanning 178-231 (TQITKPLVSLSNKMIEIRRDGFQNKLQLNTNYEEIDNLANTFNEMMSQIEESFN) is the HAMP domain. One can recognise a Histidine kinase domain in the interval 239-451 (DASHELRTPL…NKGTTFKIIF (213 aa)). His242 is subject to Phosphohistidine; by autocatalysis.

Post-translationally, autophosphorylated.

The protein localises to the cell membrane. It catalyses the reaction ATP + protein L-histidine = ADP + protein N-phospho-L-histidine.. Member of the two-component regulatory system ArlS/ArlR involved in the regulation of adhesion, autolysis, multidrug resistance and virulence. ArlS probably functions as a sensor protein kinase which is autophosphorylated at a histidine residue and transfers its phosphate group to ArlR. The polypeptide is Signal transduction histidine-protein kinase ArlS (arlS) (Staphylococcus aureus (strain bovine RF122 / ET3-1)).